We begin with the raw amino-acid sequence, 152 residues long: UPF0266 membrane protein KPN78578_23010 (152 aa).

3 helical membrane passes run Leu-6–Met-26, Val-45–His-65, and Thr-67–Ile-87.

The protein belongs to the UPF0266 family.

It localises to the cell inner membrane. This chain is UPF0266 membrane protein KPN78578_23010, found in Klebsiella pneumoniae subsp. pneumoniae (strain ATCC 700721 / MGH 78578).